Here is a 64-residue protein sequence, read N- to C-terminus: Small ribosomal subunit protein bS21 (64 aa).

The disordered stretch occupies residues 42–64 (KKEKEKAAAKKRNKYNKRRSFYY). The span at 50–64 (AKKRNKYNKRRSFYY) shows a compositional bias: basic residues.

It belongs to the bacterial ribosomal protein bS21 family.

This chain is Small ribosomal subunit protein bS21, found in Malacoplasma penetrans (strain HF-2) (Mycoplasma penetrans).